Here is a 418-residue protein sequence, read N- to C-terminus: RapA guanosine triphosphatase-activating protein B (418 aa).

The region spanning 142–407 is the Rap-GAP domain; sequence LVKVCEPEFN…EKASALINVI (266 aa). The segment at 304 to 339 is disordered; sequence NRVVGEQPSPSLTTTTTTTTTTSPTINSNSPTPSNK. A compositionally biased stretch (low complexity) spans 311–338; that stretch reads PSPSLTTTTTTTTTTSPTINSNSPTPSN.

Its function is as follows. Mediates the deactivation of rap1 during multicellular development and is required for normal morphogenesis. Also required for the correct patterning of specific subtypes of prestalk cells. The sequence is that of RapA guanosine triphosphatase-activating protein B (rapgapB) from Dictyostelium discoideum (Social amoeba).